The primary structure comprises 192 residues: Pyridoxal 5'-phosphate synthase subunit PdxT (192 aa).

50–52 provides a ligand contact to L-glutamine; sequence GES. The active-site Nucleophile is the cysteine 82. L-glutamine contacts are provided by residues arginine 109 and 136–137; that span reads IR. Active-site charge relay system residues include histidine 172 and glutamate 174.

This sequence belongs to the glutaminase PdxT/SNO family. In terms of assembly, in the presence of PdxS, forms a dodecamer of heterodimers. Only shows activity in the heterodimer.

It catalyses the reaction aldehydo-D-ribose 5-phosphate + D-glyceraldehyde 3-phosphate + L-glutamine = pyridoxal 5'-phosphate + L-glutamate + phosphate + 3 H2O + H(+). The enzyme catalyses L-glutamine + H2O = L-glutamate + NH4(+). The protein operates within cofactor biosynthesis; pyridoxal 5'-phosphate biosynthesis. Functionally, catalyzes the hydrolysis of glutamine to glutamate and ammonia as part of the biosynthesis of pyridoxal 5'-phosphate. The resulting ammonia molecule is channeled to the active site of PdxS. The polypeptide is Pyridoxal 5'-phosphate synthase subunit PdxT (Haemophilus influenzae (strain PittGG)).